Reading from the N-terminus, the 124-residue chain is Small ribosomal subunit protein uS13 (124 aa).

The interval 95-124 (GLPVRGQRTRHNARTRKGPRKTVGAKKGKR) is disordered. Over residues 101-124 (QRTRHNARTRKGPRKTVGAKKGKR) the composition is skewed to basic residues.

It belongs to the universal ribosomal protein uS13 family. Part of the 30S ribosomal subunit. Forms a loose heterodimer with protein S19. Forms two bridges to the 50S subunit in the 70S ribosome.

Located at the top of the head of the 30S subunit, it contacts several helices of the 16S rRNA. In the 70S ribosome it contacts the 23S rRNA (bridge B1a) and protein L5 of the 50S subunit (bridge B1b), connecting the 2 subunits; these bridges are implicated in subunit movement. Contacts the tRNAs in the A and P-sites. The protein is Small ribosomal subunit protein uS13 of Coprothermobacter proteolyticus (strain ATCC 35245 / DSM 5265 / OCM 4 / BT).